The chain runs to 147 residues: Ribonuclease 4 (147 aa).

A signal peptide spans 1-28; that stretch reads MALQRTHSLLLLLLLTLLGLGLVQPSYG. Glutamine 29 carries the post-translational modification Pyrrolidone carboxylic acid. Residues arginine 35, histidine 40, lysine 68, asparagine 71, and threonine 72 each contribute to the dUMP site. Residue histidine 40 is the Proton acceptor of the active site. 4 disulfide bridges follow: cysteine 53–cysteine 109, cysteine 67–cysteine 120, cysteine 85–cysteine 135, and cysteine 92–cysteine 99. Histidine 144 acts as the Proton donor in catalysis. Phenylalanine 145 is a binding site for dUMP.

Belongs to the pancreatic ribonuclease family.

It is found in the secreted. Cleaves preferentially after uridine bases. Has antimicrobial activity against uropathogenic E.coli (UPEC). Probably contributes to urinary tract sterility. This Pan troglodytes (Chimpanzee) protein is Ribonuclease 4 (RNASE4).